A 100-amino-acid polypeptide reads, in one-letter code: Large ribosomal subunit protein uL23 (100 aa).

The protein belongs to the universal ribosomal protein uL23 family. In terms of assembly, part of the 50S ribosomal subunit. Contacts protein L29, and trigger factor when it is bound to the ribosome.

Functionally, one of the early assembly proteins it binds 23S rRNA. One of the proteins that surrounds the polypeptide exit tunnel on the outside of the ribosome. Forms the main docking site for trigger factor binding to the ribosome. The protein is Large ribosomal subunit protein uL23 of Pseudoalteromonas atlantica (strain T6c / ATCC BAA-1087).